Reading from the N-terminus, the 150-residue chain is Histone H2A.1 (150 aa).

Residue Met1 is modified to N-acetylmethionine. 2 stretches are compositionally biased toward basic residues: residues 1–24 (MDAS…KKSV) and 141–150 (SKAKKSPKKA). Disordered regions lie at residues 1–26 (MDAS…SVTR) and 128–150 (RKEN…PKKA). Short sequence motifs (SPKK motif) lie at residues 139 to 142 (SPSK) and 146 to 149 (SPKK).

It belongs to the histone H2A family. In terms of assembly, the nucleosome is a histone octamer containing two molecules each of H2A, H2B, H3 and H4 assembled in one H3-H4 heterotetramer and two H2A-H2B heterodimers. The octamer wraps approximately 147 bp of DNA. High expression in root meristematic tissues, moderate in whole shoot and very low in mature leaves.

Its subcellular location is the nucleus. It localises to the chromosome. Its function is as follows. Core component of nucleosome. Nucleosomes wrap and compact DNA into chromatin, limiting DNA accessibility to the cellular machineries which require DNA as a template. Histones thereby play a central role in transcription regulation, DNA repair, DNA replication and chromosomal stability. DNA accessibility is regulated via a complex set of post-translational modifications of histones, also called histone code, and nucleosome remodeling. This chain is Histone H2A.1, found in Pisum sativum (Garden pea).